The chain runs to 103 residues: uncharacterized protein (103 aa).

The next 2 membrane-spanning stretches (helical) occupy residues 13-33 (LLPF…YCIL) and 77-97 (FSIY…PYLF).

It is found in the endoplasmic reticulum membrane. This is an uncharacterized protein from Schizosaccharomyces pombe (strain 972 / ATCC 24843) (Fission yeast).